Here is a 489-residue protein sequence, read N- to C-terminus: N-succinylglutamate 5-semialdehyde dehydrogenase (489 aa).

223-228 (GSASTG) is an NAD(+) binding site. Active-site residues include Glu-246 and Cys-280.

It belongs to the aldehyde dehydrogenase family. AstD subfamily.

It catalyses the reaction N-succinyl-L-glutamate 5-semialdehyde + NAD(+) + H2O = N-succinyl-L-glutamate + NADH + 2 H(+). Its pathway is amino-acid degradation; L-arginine degradation via AST pathway; L-glutamate and succinate from L-arginine: step 4/5. Catalyzes the NAD-dependent reduction of succinylglutamate semialdehyde into succinylglutamate. The chain is N-succinylglutamate 5-semialdehyde dehydrogenase from Acinetobacter baylyi (strain ATCC 33305 / BD413 / ADP1).